Here is a 250-residue protein sequence, read N- to C-terminus: 2,3-bisphosphoglycerate-dependent phosphoglycerate mutase (250 aa).

Substrate-binding positions include Arg-8–Asn-15, Thr-21–Gly-22, Arg-60, Glu-87–Tyr-90, Lys-98, Arg-114–Arg-115, and Gly-183–Asn-184. The active-site Tele-phosphohistidine intermediate is His-9. Glu-87 serves as the catalytic Proton donor/acceptor.

This sequence belongs to the phosphoglycerate mutase family. BPG-dependent PGAM subfamily.

The enzyme catalyses (2R)-2-phosphoglycerate = (2R)-3-phosphoglycerate. The protein operates within carbohydrate degradation; glycolysis; pyruvate from D-glyceraldehyde 3-phosphate: step 3/5. In terms of biological role, catalyzes the interconversion of 2-phosphoglycerate and 3-phosphoglycerate. This is 2,3-bisphosphoglycerate-dependent phosphoglycerate mutase from Borrelia duttonii (strain Ly).